The following is a 222-amino-acid chain: Glutathione-specific gamma-glutamylcyclotransferase 1 (222 aa).

The segment at Met-1 to Trp-25 is disordered. Ile-35–Ser-40 contacts substrate. The active-site Proton acceptor is Glu-115.

It belongs to the gamma-glutamylcyclotransferase family. ChaC subfamily. As to quaternary structure, interacts with NOTCH1 (via extracellular region).

It localises to the cytoplasm. The protein resides in the cytosol. The protein localises to the golgi apparatus. Its subcellular location is the trans-Golgi network. It catalyses the reaction glutathione = L-cysteinylglycine + 5-oxo-L-proline. Its function is as follows. Catalyzes the cleavage of glutathione into 5-oxo-L-proline and a Cys-Gly dipeptide. Acts specifically on glutathione, but not on other gamma-glutamyl peptides. Glutathione depletion is an important factor for apoptosis initiation and execution. Acts as a pro-apoptotic component of the unfolded protein response pathway by mediating the pro-apoptotic effects of the ATF4-ATF3-DDIT3/CHOP cascade. Negative regulator of Notch signaling pathway involved in embryonic neurogenesis: acts by inhibiting Notch cleavage by furin, maintaining Notch in an immature inactive form, thereby promoting neurogenesis in embryos. This chain is Glutathione-specific gamma-glutamylcyclotransferase 1, found in Rattus norvegicus (Rat).